Reading from the N-terminus, the 1012-residue chain is 5'-3' exoribonuclease 2 (1012 aa).

The segment at 264–281 (GKCFLCGQEGHRAADCEG) adopts a CCHC-type zinc-finger fold. Disordered regions lie at residues 411–439 (VQQRQSERFRRDKARDKARDNARDNAQAS), 888–976 (TFKD…QRQV), and 990–1012 (QRKKEKYLRKKAKYAQGAPPKTA). The span at 415–433 (QSERFRRDKARDKARDNAR) shows a compositional bias: basic and acidic residues. The span at 904-914 (ITPKKMNSPQR) shows a compositional bias: polar residues. Composition is skewed to basic and acidic residues over residues 918–928 (WKKDETPQSRE) and 950–962 (PQREFTREKKKEN). Positions 990 to 1002 (QRKKEKYLRKKAK) are enriched in basic residues.

This sequence belongs to the 5'-3' exonuclease family. XRN2/RAT1 subfamily. As to expression, expressed in roots, leaves, stems and flowers.

The protein resides in the nucleus. Functionally, possesses 5'-&gt;3' exoribonuclease activity. Acts as an endogenous post-transcriptional gene silencing (PTGS) suppressor. Degrades miRNA-derived loops, excised during miRNA maturation in the nucleus. Involved in pre-rRNA processing. Involved in the primary exonucleolytic shortening of the 5' external transcribed spacer (5'ETS), required for endonucleolytic processing at site P by the U3 snoRNP complex. Involved with XRN3 in the 5'-end processing of 5.8S and 25S rRNAs. Contributes with XRN3 to polyadenylation-dependent nuclear RNA surveillance. Involved in the degradation of aberrant polyadenylated pre-rRNA through 5'-end processing. The protein is 5'-3' exoribonuclease 2 of Arabidopsis thaliana (Mouse-ear cress).